We begin with the raw amino-acid sequence, 614 residues long: Male-specific lethal 1 homolog (614 aa).

Disordered regions lie at residues 1-127 (MTMR…GCSP) and 147-217 (KEPT…GASS). A phosphoserine mark is found at serine 66 and serine 126. Over residues 158 to 169 (GAASPAATASDP) the composition is skewed to low complexity. Over residues 170-184 (AGPPPLPLPGPPPLA) the composition is skewed to pro residues. Residues 185-194 (PTATAGTLAA) show a composition bias toward low complexity. Residue serine 205 is modified to Phosphoserine. The stretch at 213-282 (SGASSQAACL…KDNEKERHKL (70 aa)) forms a coiled coil. Positions 223–237 (KQILLLQLDLIEQQQ) are interaction with MSL2. Basic and acidic residues-rich tracts occupy residues 272-281 (KKDNEKERHK) and 294-304 (TELSEKIKLEC). The segment at 272 to 420 (KKDNEKERHK…PKEKAFSSEI (149 aa)) is disordered. Lysine 301 participates in a covalent cross-link: Glycyl lysine isopeptide (Lys-Gly) (interchain with G-Cter in SUMO2). The short motif at 317–346 (PKPFSCGRSGKGHKRKSPFGSTERKTPVKK) is the Nuclear localization signal element. Lysine 353 carries the post-translational modification N6-acetyllysine. Residues lysine 365 and lysine 378 each participate in a glycyl lysine isopeptide (Lys-Gly) (interchain with G-Cter in SUMO2) cross-link. Residues 376 to 392 (VCKRELRSQETPEKPRS) are compositionally biased toward basic and acidic residues. Serine 393 carries the post-translational modification Phosphoserine. Positions 393–407 (SVDTPPRLSTPQKGP) are enriched in polar residues. Position 396 is a phosphothreonine (threonine 396). Serine 442 is modified (phosphoserine). Residues 472–591 (VLAVPSWRDH…LTPQNFELPW (120 aa)) form the PEHE domain. Residues 496 to 514 (ENLDDSVFSKRHAKLELDE) form an interaction with KAT8 HAT domain region. Positions 505–519 (KRHAKLELDEKRRKR) match the Bipartite nuclear localization signal motif. Residues 550 to 591 (EVTSFFPEPDDVESLMITPFLPVVAFGRPLPKLTPQNFELPW) are sufficient for interaction with MSL3 MRG domain.

Belongs to the msl-1 family. In terms of assembly, component of a multisubunit histone acetyltransferase complex (MSL) at least composed of the KAT8/MOF/MYST1, MSL1/hampin, MSL2 and MSL3. Forms a MSL heterotetrameric core with MSL2. Interacts (via PEHE domain) with KAT8 (via HAT domain) and MSL3 (via MRG domain); both interactions are direct. Directly interacts with NUPR1. Interacts with TP53BP1; this interaction may be required for MSL1 DNA repair activity, but not for histone acetyltransferase activity. Interacts with TTC4, ECM2 and PIHD1. Sumoylated with SUMO1.

The protein localises to the nucleus. The protein resides in the nucleoplasm. It localises to the nucleus speckle. Its function is as follows. Non-catalytic component of the MSL histone acetyltransferase complex, a multiprotein complex that mediates the majority of histone H4 acetylation at 'Lys-16' (H4K16ac), an epigenetic mark that prevents chromatin compaction. The MSL complex is required for chromosome stability and genome integrity by maintaining homeostatic levels of H4K16ac. The MSL complex is also involved in gene dosage by promoting up-regulation of genes expressed by the X chromosome. X up-regulation is required to compensate for autosomal biallelic expression. The MSL complex also participates in gene dosage compensation by promoting expression of Tsix non-coding RNA. Within the MSL complex, acts as a scaffold to tether MSL3 and KAT8 together for enzymatic activity regulation. Greatly enhances MSL2 E3 ubiquitin ligase activity, promoting monoubiquitination of histone H2B at 'Lys-34' (H2BK34Ub). This modification in turn stimulates histone H3 methylation at 'Lys-4' (H3K4me) and 'Lys-79' (H3K79me) and leads to gene activation, including that of HOXA9 and MEIS1. The chain is Male-specific lethal 1 homolog from Homo sapiens (Human).